Consider the following 265-residue polypeptide: uncharacterized protein (265 aa).

A signal peptide spans 1–20; it reads MSRAMALFFVLCWIQDEIVL. Residues 192-212 form a helical membrane-spanning segment; sequence IIAAVSGVAILMAIVLLLLGL.

The protein localises to the membrane. This is an uncharacterized protein from Homo sapiens (Human).